Consider the following 409-residue polypeptide: Histidine--tRNA ligase (409 aa).

This sequence belongs to the class-II aminoacyl-tRNA synthetase family. In terms of assembly, homodimer.

The protein localises to the cytoplasm. It carries out the reaction tRNA(His) + L-histidine + ATP = L-histidyl-tRNA(His) + AMP + diphosphate + H(+). The protein is Histidine--tRNA ligase of Campylobacter fetus subsp. fetus (strain 82-40).